Here is a 98-residue protein sequence, read N- to C-terminus: UPF0235 protein APJL_1398 (98 aa).

Belongs to the UPF0235 family.

The chain is UPF0235 protein APJL_1398 from Actinobacillus pleuropneumoniae serotype 3 (strain JL03).